The sequence spans 371 residues: NDMA-dependent alcohol dehydrogenase (371 aa).

The Zn(2+) site is built by cysteine 40, histidine 61, cysteine 91, cysteine 94, cysteine 97, cysteine 105, and cysteine 167.

This sequence belongs to the zinc-containing alcohol dehydrogenase family. As to quaternary structure, homotrimer. It depends on NADH as a cofactor.

It catalyses the reaction N,N-dimethyl-4-nitrosoaniline + a primary alcohol = 4-(hydroxylamino)-N,N-dimethylaniline + an aldehyde. The catalysed reaction is ethanol + A = acetaldehyde + AH2. Its activity is regulated as follows. Inhibited by trans-4-(N,N-dimethylamino)-cinnamaldehyde through direct binding to the catalytic zinc ion in a substrate-like geometry. Isobutyramide acts as a competitive inhibitor with respect to the electron acceptor NDMA. Acetaldehyde, AMP, ADP, ATP, as well as CuSO(4), FeSO(4), HgCl(2), NiCl(2), ZnSO(4), KCN, and NaN(3) are additional inhibitors of the catalytic activity. Catalytically different from common alcohol dehydrogenases. Effective in oxidizing ethanol, other primary alcohols and benzylalcohol only in the presence of p-nitroso-N,N-dimethylaniline (NDMA) as an electron acceptor. NADH acts as a cofactor here instead as a coenzyme. This is NDMA-dependent alcohol dehydrogenase from Amycolatopsis methanolica.